The primary structure comprises 424 residues: GTPase Obg (424 aa).

The Obg domain occupies A2–L158. An OBG-type G domain is found at S159–E326. GTP contacts are provided by residues G165–S172, F190–V194, D211–G214, N280–D283, and S307–L309. 2 residues coordinate Mg(2+): S172 and T192. Residues K344–E422 form the OCT domain.

It belongs to the TRAFAC class OBG-HflX-like GTPase superfamily. OBG GTPase family. Monomer. The cofactor is Mg(2+).

The protein localises to the cytoplasm. Its function is as follows. An essential GTPase which binds GTP, GDP and possibly (p)ppGpp with moderate affinity, with high nucleotide exchange rates and a fairly low GTP hydrolysis rate. Plays a role in control of the cell cycle, stress response, ribosome biogenesis and in those bacteria that undergo differentiation, in morphogenesis control. In Mycoplasmopsis synoviae (strain 53) (Mycoplasma synoviae), this protein is GTPase Obg.